Consider the following 311-residue polypeptide: 4-diphosphocytidyl-2-C-methyl-D-erythritol kinase (311 aa).

The active site involves lysine 16. 100–110 (PIGAGLAGGSS) is an ATP binding site. The active site involves aspartate 142.

It belongs to the GHMP kinase family. IspE subfamily.

It carries out the reaction 4-CDP-2-C-methyl-D-erythritol + ATP = 4-CDP-2-C-methyl-D-erythritol 2-phosphate + ADP + H(+). The protein operates within isoprenoid biosynthesis; isopentenyl diphosphate biosynthesis via DXP pathway; isopentenyl diphosphate from 1-deoxy-D-xylulose 5-phosphate: step 3/6. Its function is as follows. Catalyzes the phosphorylation of the position 2 hydroxy group of 4-diphosphocytidyl-2C-methyl-D-erythritol. The polypeptide is 4-diphosphocytidyl-2-C-methyl-D-erythritol kinase (Prochlorococcus marinus (strain AS9601)).